The chain runs to 247 residues: (7aS)-7a-methyl-1,5-dioxo-2,3,5,6,7,7a-hexahydro-1H-indene-carboxyl-CoA hydrolase (247 aa).

It belongs to the enoyl-CoA hydratase/isomerase family.

It catalyses the reaction (7aS)-7a-methyl-1,5-dioxo-2,3,5,6,7,7a-hexahydro-1H-indene-carboxyl-CoA + H2O = (3E)-2-(2-carboxylatoethyl)-3-methyl-6-oxocyclohex-1-ene-1-carboxyl-CoA + H(+). The protein operates within steroid metabolism; cholesterol degradation. Involved in the final steps of cholesterol and steroid degradation. Catalyzes the hydrolytic ring D opening of (7aS)-7a-methyl-1,5-dioxo-2,3,5,6,7,7a-hexahydro-1H-indene-carboxyl-CoA (HIEC-CoA) to (3E)-2-(2-carboxylatoethyl)-3-methyl-6-oxocyclohex-1-ene-1-carboxyl-CoA (COCHEA-CoA). The polypeptide is (7aS)-7a-methyl-1,5-dioxo-2,3,5,6,7,7a-hexahydro-1H-indene-carboxyl-CoA hydrolase (Mycobacterium tuberculosis (strain ATCC 25618 / H37Rv)).